Reading from the N-terminus, the 399-residue chain is MMRASYLFTSESVSEGHPDKVCDRISDEIVDLFYREGPKAGIDPWQIRAACETLATTNKVVIAGETRGPASVTNEHIEHVVREAIKDIGYEQAGFHWKTCDIEILLHPQSADIAQGVDALQPGEVKEEGAGDQGIMFGYACNETPDLMPAPIFYAHKILRLIAEARHSGVEKVLGPDSKSQVTVRYENGKPVGVREIVVSHQHLVEDMTSAQVRERVEPYVREALPKDWITKDTIWHINPTGKFFIGGPDGDTGLTGRKIIVDTYGGAAPHGGGAFSGKDPTKVDRSAAYAARYLAKNIVAAGLADRCTLQLAYAIGVARPLSIYIDTHGTGKVSEDKLEKAAAEVMNLTPRGIRSHLDLNRPIYARTAAYGHFGRTPDNEGGFSWEKTDLAEAFKRAV.

Histidine 17 contributes to the ATP binding site. A Mg(2+)-binding site is contributed by aspartate 19. Glutamate 52 serves as a coordination point for K(+). 2 residues coordinate L-methionine: glutamate 65 and glutamine 109. The interval 109–119 (QSADIAQGVDA) is flexible loop. ATP-binding positions include 177–179 (DSK), 243–244 (KF), aspartate 252, 258–259 (RK), alanine 275, and lysine 279. Aspartate 252 is an L-methionine binding site. Lysine 283 contributes to the L-methionine binding site.

The protein belongs to the AdoMet synthase family. As to quaternary structure, homotetramer; dimer of dimers. Mg(2+) serves as cofactor. K(+) is required as a cofactor.

It is found in the cytoplasm. It carries out the reaction L-methionine + ATP + H2O = S-adenosyl-L-methionine + phosphate + diphosphate. It participates in amino-acid biosynthesis; S-adenosyl-L-methionine biosynthesis; S-adenosyl-L-methionine from L-methionine: step 1/1. Its function is as follows. Catalyzes the formation of S-adenosylmethionine (AdoMet) from methionine and ATP. The overall synthetic reaction is composed of two sequential steps, AdoMet formation and the subsequent tripolyphosphate hydrolysis which occurs prior to release of AdoMet from the enzyme. This chain is S-adenosylmethionine synthase, found in Bradyrhizobium sp. (strain BTAi1 / ATCC BAA-1182).